A 109-amino-acid chain; its full sequence is Large ribosomal subunit protein P1C (109 aa).

Over residues 68 to 83 (ASAPTAAGAGAAAPAE) the composition is skewed to low complexity. A disordered region spans residues 68–109 (ASAPTAAGAGAAAPAEAAEEEKKEEAKEEEESDEDMGFGLFD). Positions 94-103 (KEEEESDEDM) are enriched in acidic residues. Position 99 is a phosphoserine (Ser99).

This sequence belongs to the eukaryotic ribosomal protein P1/P2 family. In terms of assembly, component of the large ribosomal subunit (LSU). Mature yeast ribosomes consist of a small (40S) and a large (60S) subunit. The 40S small subunit contains 1 molecule of ribosomal RNA (18S rRNA) and at least 33 different proteins. The large 60S subunit contains 3 rRNA molecules (25S, 5.8S and 5S rRNA) and at least 46 different proteins. The acidic ribosomal P-proteins form the stalk structure of the 60S subunit. They are organized as a pentameric complex in which uL10/P0 interacts with 2 heterodimers of P1 and P2 proteins.

Its subcellular location is the cytoplasm. Its function is as follows. Component of the ribosome, a large ribonucleoprotein complex responsible for the synthesis of proteins in the cell. The small ribosomal subunit (SSU) binds messenger RNAs (mRNAs) and translates the encoded message by selecting cognate aminoacyl-transfer RNA (tRNA) molecules. The large subunit (LSU) contains the ribosomal catalytic site termed the peptidyl transferase center (PTC), which catalyzes the formation of peptide bonds, thereby polymerizing the amino acids delivered by tRNAs into a polypeptide chain. The nascent polypeptides leave the ribosome through a tunnel in the LSU and interact with protein factors that function in enzymatic processing, targeting, and the membrane insertion of nascent chains at the exit of the ribosomal tunnel. The chain is Large ribosomal subunit protein P1C (rpp103) from Schizosaccharomyces pombe (strain 972 / ATCC 24843) (Fission yeast).